A 196-amino-acid polypeptide reads, in one-letter code: ATP-dependent Clp protease proteolytic subunit (196 aa).

The active-site Nucleophile is the Ser101. Residue His126 is part of the active site.

The protein belongs to the peptidase S14 family. In terms of assembly, component of the chloroplastic Clp protease core complex.

It is found in the plastid. The protein resides in the chloroplast stroma. It catalyses the reaction Hydrolysis of proteins to small peptides in the presence of ATP and magnesium. alpha-casein is the usual test substrate. In the absence of ATP, only oligopeptides shorter than five residues are hydrolyzed (such as succinyl-Leu-Tyr-|-NHMec, and Leu-Tyr-Leu-|-Tyr-Trp, in which cleavage of the -Tyr-|-Leu- and -Tyr-|-Trp bonds also occurs).. Functionally, cleaves peptides in various proteins in a process that requires ATP hydrolysis. Has a chymotrypsin-like activity. Plays a major role in the degradation of misfolded proteins. This Lactuca sativa (Garden lettuce) protein is ATP-dependent Clp protease proteolytic subunit.